Reading from the N-terminus, the 642-residue chain is Arginine--tRNA ligase, chloroplastic/mitochondrial (642 aa).

Residues 1 to 53 constitute a chloroplast and mitochondrion transit peptide; it reads MFIFPKDENRRETLTTKLRFSADHLTFTTVTEKLRATAWRFAFSSRAKSVVAM. Ala-54 carries the N-acetylalanine modification. The 'HIGH' region motif lies at 190–201; that stretch reads PNIAKEMHVGHL.

It belongs to the class-I aminoacyl-tRNA synthetase family.

The protein resides in the plastid. Its subcellular location is the chloroplast. It localises to the mitochondrion. It catalyses the reaction tRNA(Arg) + L-arginine + ATP = L-arginyl-tRNA(Arg) + AMP + diphosphate. Functionally, forms part of a macromolecular complex that catalyzes the attachment of specific amino acids to cognate tRNAs during protein synthesis. This Arabidopsis thaliana (Mouse-ear cress) protein is Arginine--tRNA ligase, chloroplastic/mitochondrial.